Here is a 135-residue protein sequence, read N- to C-terminus: Histone H3 type 2 (135 aa).

The interval 1 to 40 is disordered; it reads MARTKQTARKSTGGKAPRKQLATKAARKTPATGGVKKPHR. K5 is modified (N6-methyllysine). K10 carries the post-translational modification N6-acetyllysine; alternate. At K10 the chain carries N6-methyllysine; alternate. S11 carries the phosphoserine modification. T12 bears the Phosphothreonine mark. Residues K15, K19, and K24 each carry the N6-acetyllysine modification. K28 bears the N6-acetyllysine; alternate mark. K28 bears the N6-methyllysine; alternate mark. K36 and K37 each carry N6-methyllysine.

It belongs to the histone H3 family. The nucleosome is a histone octamer containing two molecules each of H2A, H2B, H3 and H4 assembled in one H3-H4 heterotetramer and two H2A-H2B heterodimers. The octamer wraps approximately 147 bp of DNA. Post-translationally, acetylation is generally linked to gene activation. Acetylated to form H3K9ac (11%), H3K14ac (17%), H3K18ac (11%), H3K23ac (16%) and H3K27ac (7%). H3K4, H3K35 and H3K36 are not acetylated. H3K4me prevents acetylation. 32% of the histone H3 are acetylated with, on average, 2.4 acetyl-Lys. They are all continuously deacatylated and re-acetylated with a half-life of approximately 2 minutes. In terms of processing, monomethylated to form H3K4me1 (81%), H3K9me1 (16%), H3K27me1 (25%), H3K35me1 (25%) and H3K36me1 (5%). No methylation at H3K14, H3K18 and H3K23. Methylated by a protein complex that includes Mut11. Set1 methylates specifically H3K4. H3K4me1 is associated with silenced euchromatin. Set3 forms H3K9me1, while H3K9me2 is undetected. H3K9me1 is specifically associated with silent, multi-copy transgenes. No phosphorylation detected.

The protein localises to the nucleus. It is found in the chromosome. Functionally, core component of nucleosome. Nucleosomes wrap and compact DNA into chromatin, limiting DNA accessibility to the cellular machineries which require DNA as a template. Histones thereby play a central role in transcription regulation, DNA repair, DNA replication and chromosomal stability. DNA accessibility is regulated via a complex set of post-translational modifications of histones, also called histone code, and nucleosome remodeling. This is Histone H3 type 2 (ch3-II) from Chlamydomonas reinhardtii (Chlamydomonas smithii).